The following is a 277-amino-acid chain: 14-3-3 protein (277 aa).

The segment at 252–277 (LQTQEQQQQPVGEGAEAPKVEATEQQ) is disordered. The segment covering 267 to 277 (EAPKVEATEQQ) has biased composition (basic and acidic residues).

The protein belongs to the 14-3-3 family.

The chain is 14-3-3 protein from Eimeria tenella (Coccidian parasite).